We begin with the raw amino-acid sequence, 746 residues long: Root phototropism protein 3 (746 aa).

Positions 1–24 are disordered; it reads MMWESESDGGVGVGGGGGREYGDG. Residues 9–19 are compositionally biased toward gly residues; sequence GGVGVGGGGGR. The region spanning 54–122 is the BTB domain; it reads SDLLVKIGDM…CYGVPVDLTA (69 aa). In terms of domain architecture, NPH3 spans 250–605; the sequence is DWWFEDVSIL…VQVLFSEQVK (356 aa). The interval 461-500 is disordered; that stretch reads EQTEGSSPSRMSPSPSQSMYADIPRGNNNNGGGGGGNNQN. Over residues 466-478 the composition is skewed to low complexity; sequence SSPSRMSPSPSQS. Tyr-546 carries the post-translational modification Phosphotyrosine. The disordered stretch occupies residues 708–746; sequence SKLTKMSGQESHDISSGGEQAGVDHPPPRKPRRWRNSIS. Positions 735–746 are enriched in basic residues; the sequence is PRKPRRWRNSIS.

This sequence belongs to the NPH3 family. As to quaternary structure, interacts with PKS1, PKS2, RPT2, PHOT1 and PHOT2. Subunit of a complex made of CAR6, PHOT1 and RPT3/NPH3. Phosphorylated in the dark. Expressed in hypocotyls, guard cells and mesophyll cells.

The protein resides in the cell membrane. Its pathway is protein modification; protein ubiquitination. May act as a substrate-specific adapter of an E3 ubiquitin-protein ligase complex (CUL3-RBX1-BTB) which mediates the ubiquitination and subsequent proteasomal degradation of target proteins. Signal transducer of the phototropic response and photo-induced movements. Involved in the phot1 pathway under low blue light (LBL) fluence rate and in the phot2 pathway under higher fluence rate of blue light (HBL). Necessary for root and hypocotyl phototropisms, but not for the regulation of stomata opening. Not involved in chloroplast accumulation and translocation. In Arabidopsis thaliana (Mouse-ear cress), this protein is Root phototropism protein 3 (RPT3).